Consider the following 561-residue polypeptide: 3-hydroxy-3-methylglutaryl-coenzyme A reductase 3 (561 aa).

2 helical membrane passes run 25-45 (PIRH…AYLM) and 69-89 (IFGL…AFVQ). Residues 90 to 145 (SIVSSSDDEEEDFLVGPARGSSAAAAVAPPPPPSSPAQCSLLGSPHDDAARERMPE) are linker. The disordered stretch occupies residues 113–146 (AAAVAPPPPPSSPAQCSLLGSPHDDAARERMPEE). A compositionally biased stretch (basic and acidic residues) spans 134–143 (PHDDAARERM). The tract at residues 146–561 (EDEEIVSSVV…SSKDMSKVIS (416 aa)) is catalytic. The active-site Charge relay system is the Glu-240. Asn-304 is a glycosylation site (N-linked (GlcNAc...) asparagine). Catalysis depends on charge relay system residues Lys-372 and Asp-448. Catalysis depends on His-546, which acts as the Proton donor. Asn-550 carries an N-linked (GlcNAc...) asparagine glycan.

Belongs to the HMG-CoA reductase family.

It is found in the endoplasmic reticulum membrane. The catalysed reaction is (R)-mevalonate + 2 NADP(+) + CoA = (3S)-3-hydroxy-3-methylglutaryl-CoA + 2 NADPH + 2 H(+). Its pathway is metabolic intermediate biosynthesis; (R)-mevalonate biosynthesis; (R)-mevalonate from acetyl-CoA: step 3/3. Functionally, catalyzes the synthesis of mevalonate. The specific precursor of all isoprenoid compounds present in plants. The protein is 3-hydroxy-3-methylglutaryl-coenzyme A reductase 3 (HMG3) of Oryza sativa subsp. japonica (Rice).